We begin with the raw amino-acid sequence, 215 residues long: UPF0502 protein CKO_01995 (215 aa).

It belongs to the UPF0502 family.

This chain is UPF0502 protein CKO_01995, found in Citrobacter koseri (strain ATCC BAA-895 / CDC 4225-83 / SGSC4696).